Reading from the N-terminus, the 100-residue chain is Large ribosomal subunit protein uL23 (100 aa).

Belongs to the universal ribosomal protein uL23 family. Part of the 50S ribosomal subunit. Contacts protein L29, and trigger factor when it is bound to the ribosome.

In terms of biological role, one of the early assembly proteins it binds 23S rRNA. One of the proteins that surrounds the polypeptide exit tunnel on the outside of the ribosome. Forms the main docking site for trigger factor binding to the ribosome. This is Large ribosomal subunit protein uL23 from Thermotoga maritima (strain ATCC 43589 / DSM 3109 / JCM 10099 / NBRC 100826 / MSB8).